A 371-amino-acid polypeptide reads, in one-letter code: Archaeal glycosylation protein Q (371 aa).

Residues 19–39 are disordered; the sequence is QRSDGSMPAGHNGPYHDPETP.

It is found in the cytoplasm. The protein operates within cell surface structure biogenesis; S-layer biogenesis. Functionally, putative isomerase involved in the N-glycosylation pathway. Required for the appearance of the methyl ester of hexuronic acid found at position four of the pentasaccharide N-linked to the S-layer glycoprotein. Either involved in preparing the third sugar for attachment of the fourth pentasaccharide subunit or processing the fourth sugar prior to its addition to the lipid-linked trisaccharide. In Haloferax volcanii (strain ATCC 29605 / DSM 3757 / JCM 8879 / NBRC 14742 / NCIMB 2012 / VKM B-1768 / DS2) (Halobacterium volcanii), this protein is Archaeal glycosylation protein Q (aglQ).